Reading from the N-terminus, the 77-residue chain is Acyl carrier protein (77 aa).

Residues 2–77 enclose the Carrier domain; it reads ADVMERVTKI…DVVDYINNNQ (76 aa). S37 bears the O-(pantetheine 4'-phosphoryl)serine mark.

The protein belongs to the acyl carrier protein (ACP) family. In terms of processing, 4'-phosphopantetheine is transferred from CoA to a specific serine of apo-ACP by AcpS. This modification is essential for activity because fatty acids are bound in thioester linkage to the sulfhydryl of the prosthetic group.

Its subcellular location is the cytoplasm. It participates in lipid metabolism; fatty acid biosynthesis. In terms of biological role, carrier of the growing fatty acid chain in fatty acid biosynthesis. This chain is Acyl carrier protein, found in Shouchella clausii (strain KSM-K16) (Alkalihalobacillus clausii).